A 103-amino-acid polypeptide reads, in one-letter code: Thioredoxin-1 (103 aa).

The region spanning valine 2–leucine 103 is the Thioredoxin domain. Catalysis depends on nucleophile residues cysteine 30 and cysteine 33. Cysteines 30 and 33 form a disulfide.

This sequence belongs to the thioredoxin family.

Its function is as follows. Participates in various redox reactions through the reversible oxidation of its active center dithiol to a disulfide and catalyzes dithiol-disulfide exchange reactions. The polypeptide is Thioredoxin-1 (trx1) (Schizosaccharomyces pombe (strain 972 / ATCC 24843) (Fission yeast)).